The primary structure comprises 692 residues: Elongation factor G (692 aa).

The tr-type G domain maps to 8-282 (ENTRNIGIMA…AVLDYLPSPL (275 aa)). Residues 17–24 (AHIDAGKT), 81–85 (DTPGH), and 135–138 (NKMD) each bind GTP.

This sequence belongs to the TRAFAC class translation factor GTPase superfamily. Classic translation factor GTPase family. EF-G/EF-2 subfamily.

The protein localises to the cytoplasm. Its function is as follows. Catalyzes the GTP-dependent ribosomal translocation step during translation elongation. During this step, the ribosome changes from the pre-translocational (PRE) to the post-translocational (POST) state as the newly formed A-site-bound peptidyl-tRNA and P-site-bound deacylated tRNA move to the P and E sites, respectively. Catalyzes the coordinated movement of the two tRNA molecules, the mRNA and conformational changes in the ribosome. In Halalkalibacterium halodurans (strain ATCC BAA-125 / DSM 18197 / FERM 7344 / JCM 9153 / C-125) (Bacillus halodurans), this protein is Elongation factor G (fusA).